A 115-amino-acid polypeptide reads, in one-letter code: uncharacterized protein (115 aa).

Positions 1–74 (MGTGLRSQSL…VPGSLGDTEQ (74 aa)) are disordered.

This is an uncharacterized protein from Homo sapiens (Human).